The primary structure comprises 153 residues: Flagellar assembly factor FliW (153 aa).

It belongs to the FliW family. Interacts with translational regulator CsrA and flagellin(s).

Its subcellular location is the cytoplasm. Its function is as follows. Acts as an anti-CsrA protein, binds CsrA and prevents it from repressing translation of its target genes, one of which is flagellin. Binds to flagellin and participates in the assembly of the flagellum. The chain is Flagellar assembly factor FliW from Leptospira biflexa serovar Patoc (strain Patoc 1 / Ames).